The primary structure comprises 100 residues: NAD(P)H-quinone oxidoreductase subunit 4L, chloroplastic (100 aa).

3 consecutive transmembrane segments (helical) span residues 1-21 (MLEH…YGLI), 29-49 (ALMC…TFSN), and 63-83 (IFVT…ALAI).

The protein belongs to the complex I subunit 4L family. NDH is composed of at least 16 different subunits, 5 of which are encoded in the nucleus.

It localises to the plastid. The protein localises to the chloroplast thylakoid membrane. The catalysed reaction is a plastoquinone + NADH + (n+1) H(+)(in) = a plastoquinol + NAD(+) + n H(+)(out). It carries out the reaction a plastoquinone + NADPH + (n+1) H(+)(in) = a plastoquinol + NADP(+) + n H(+)(out). Functionally, NDH shuttles electrons from NAD(P)H:plastoquinone, via FMN and iron-sulfur (Fe-S) centers, to quinones in the photosynthetic chain and possibly in a chloroplast respiratory chain. The immediate electron acceptor for the enzyme in this species is believed to be plastoquinone. Couples the redox reaction to proton translocation, and thus conserves the redox energy in a proton gradient. The sequence is that of NAD(P)H-quinone oxidoreductase subunit 4L, chloroplastic from Cycas taitungensis (Prince sago).